A 450-amino-acid chain; its full sequence is MRLSRYFMPVLKEDPKEAQIVSHRLMLRAGMIKQQAAGIYSWLPLGYKVLRRIEQIVHEEQARAGHIAMLMPTLQSADLWRESGRYDDYGEEMLRIKDRHKRDLLYGPTNEEMITDIFRSHVNSYKDLPLTLYHVQWKFRDEIRPRFGVMRGREFLMKDGYNFDLTKEDALHAYNRHLVSYLRTYERMGLQAIPMRADGGPIGGDYTHEFLVLAETGESEVFYDSEITDLKFGDRRIDYDDVAQCRAVLEEFTSRYARTDETHDAALFEQIPKERRRVARGIEVGQIFYFGTKYSEPMGATVVGPDGSRVPVHMGSHGIGVSRLLGAIIEASHDDRGIIWPEGVTPFHVGIVNLKQGDASTDGACEALYAELKAQGLDALYDDRDERAGAKFATMDLVGLPWRITVGPRGLAANKVELTSRRTGESVEMSPQEAVVRLREIYQPVFDAAK.

The protein belongs to the class-II aminoacyl-tRNA synthetase family. ProS type 2 subfamily. As to quaternary structure, homodimer.

It is found in the cytoplasm. It carries out the reaction tRNA(Pro) + L-proline + ATP = L-prolyl-tRNA(Pro) + AMP + diphosphate. In terms of biological role, catalyzes the attachment of proline to tRNA(Pro) in a two-step reaction: proline is first activated by ATP to form Pro-AMP and then transferred to the acceptor end of tRNA(Pro). The chain is Proline--tRNA ligase from Paracoccus denitrificans (strain Pd 1222).